We begin with the raw amino-acid sequence, 380 residues long: Aminomethyltransferase (380 aa).

It belongs to the GcvT family. The glycine cleavage system is composed of four proteins: P, T, L and H.

It catalyses the reaction N(6)-[(R)-S(8)-aminomethyldihydrolipoyl]-L-lysyl-[protein] + (6S)-5,6,7,8-tetrahydrofolate = N(6)-[(R)-dihydrolipoyl]-L-lysyl-[protein] + (6R)-5,10-methylene-5,6,7,8-tetrahydrofolate + NH4(+). Its function is as follows. The glycine cleavage system catalyzes the degradation of glycine. The sequence is that of Aminomethyltransferase from Koribacter versatilis (strain Ellin345).